The chain runs to 207 residues: Thiamine-phosphate synthase (207 aa).

Residues 38 to 42 and Asn70 each bind 4-amino-2-methyl-5-(diphosphooxymethyl)pyrimidine; that span reads QYRAK. Mg(2+) is bound by residues Asp71 and Asp90. Thr109 is a binding site for 4-amino-2-methyl-5-(diphosphooxymethyl)pyrimidine. 135–137 contacts 2-[(2R,5Z)-2-carboxy-4-methylthiazol-5(2H)-ylidene]ethyl phosphate; the sequence is TNS. Lys138 provides a ligand contact to 4-amino-2-methyl-5-(diphosphooxymethyl)pyrimidine. Residues Gly165 and 185-186 contribute to the 2-[(2R,5Z)-2-carboxy-4-methylthiazol-5(2H)-ylidene]ethyl phosphate site; that span reads IS.

It belongs to the thiamine-phosphate synthase family. The cofactor is Mg(2+).

It catalyses the reaction 2-[(2R,5Z)-2-carboxy-4-methylthiazol-5(2H)-ylidene]ethyl phosphate + 4-amino-2-methyl-5-(diphosphooxymethyl)pyrimidine + 2 H(+) = thiamine phosphate + CO2 + diphosphate. It carries out the reaction 2-(2-carboxy-4-methylthiazol-5-yl)ethyl phosphate + 4-amino-2-methyl-5-(diphosphooxymethyl)pyrimidine + 2 H(+) = thiamine phosphate + CO2 + diphosphate. The catalysed reaction is 4-methyl-5-(2-phosphooxyethyl)-thiazole + 4-amino-2-methyl-5-(diphosphooxymethyl)pyrimidine + H(+) = thiamine phosphate + diphosphate. Its pathway is cofactor biosynthesis; thiamine diphosphate biosynthesis; thiamine phosphate from 4-amino-2-methyl-5-diphosphomethylpyrimidine and 4-methyl-5-(2-phosphoethyl)-thiazole: step 1/1. Condenses 4-methyl-5-(beta-hydroxyethyl)thiazole monophosphate (THZ-P) and 2-methyl-4-amino-5-hydroxymethyl pyrimidine pyrophosphate (HMP-PP) to form thiamine monophosphate (TMP). The polypeptide is Thiamine-phosphate synthase (Clostridium perfringens (strain SM101 / Type A)).